The sequence spans 223 residues: Glutathione S-transferase A2 (223 aa).

Ala-2 is subject to N-acetylalanine. The GST N-terminal domain maps to 3–83 (GKPKLHYFNG…YIATKYNLYG (81 aa)). Lys-4 is subject to N6-succinyllysine. Glutathione-binding positions include Tyr-9, Arg-45, 54–55 (QV), and 67–68 (QT). Residues 85 to 208 (DMKERALIDM…QPGSQRKPPM (124 aa)) enclose the GST C-terminal domain.

Belongs to the GST superfamily. Alpha family. Homodimer. In terms of tissue distribution, expressed in corpus luteum, adrenal gland, testis, liver, lung, thyroid and kidney.

The protein localises to the cytoplasm. It catalyses the reaction RX + glutathione = an S-substituted glutathione + a halide anion + H(+). Conjugation of reduced glutathione to a wide number of exogenous and endogenous hydrophobic electrophiles. The protein is Glutathione S-transferase A2 (GSTA2) of Bos taurus (Bovine).